Consider the following 169-residue polypeptide: UPF0316 protein Dde_2502 (169 aa).

A run of 3 helical transmembrane segments spans residues 1-21 (MITA…LCDV), 38-58 (LAFS…SRVI), and 68-88 (LAFA…EGVF).

Belongs to the UPF0316 family.

The protein localises to the cell membrane. The chain is UPF0316 protein Dde_2502 from Oleidesulfovibrio alaskensis (strain ATCC BAA-1058 / DSM 17464 / G20) (Desulfovibrio alaskensis).